The chain runs to 82 residues: RNA-binding protein GK0100 (82 aa).

The protein belongs to the eukaryotic ribosomal protein eL8 family.

The chain is RNA-binding protein GK0100 from Geobacillus kaustophilus (strain HTA426).